A 334-amino-acid chain; its full sequence is O-methyltransferase SfmM3 (334 aa).

S-adenosyl-L-methionine contacts are provided by residues D190 and 216–218; that span reads GDF. Residue H236 is the Proton acceptor of the active site.

It belongs to the class I-like SAM-binding methyltransferase superfamily. Cation-independent O-methyltransferase family. COMT subfamily.

It catalyses the reaction 5-hydroxy-3-methyl-L-tyrosine + S-adenosyl-L-methionine = 5-hydroxy-3-methyl-O-methyl-L-tyrosine + S-adenosyl-L-homocysteine + H(+). It participates in antibiotic biosynthesis. Its function is as follows. O-methyltransferase that mediates the methylation of 3-hydroxy-5-methyl-L-tyrosine (3-OH-5-Me-Tyr) into 3-hydroxy-5-methyl-O-methyltyrosine (3-OH-5-Me-OMe-Tyr), a core structure of saframycin A, a potent antitumor antibiotic that belongs to the tetrahydroisoquinoline family. This is O-methyltransferase SfmM3 from Streptomyces lavendulae.